The chain runs to 359 residues: Phospho-N-acetylmuramoyl-pentapeptide-transferase (359 aa).

A run of 10 helical transmembrane segments spans residues 7 to 27, 28 to 48, 82 to 102, 103 to 123, 147 to 167, 179 to 199, 203 to 223, 229 to 249, 256 to 276, and 337 to 357; these read RSLT…VNSY, IFNS…SLVI, MGGI…NNYV, DSVG…IGFL, ALIA…NPLI, IVIF…VNLT, DGLA…EIFI, LIIY…FLKY, IFMG…ISIL, and IVEN…VLKI.

The protein belongs to the glycosyltransferase 4 family. MraY subfamily. Mg(2+) is required as a cofactor.

The protein resides in the cell inner membrane. The catalysed reaction is UDP-N-acetyl-alpha-D-muramoyl-L-alanyl-gamma-D-glutamyl-meso-2,6-diaminopimeloyl-D-alanyl-D-alanine + di-trans,octa-cis-undecaprenyl phosphate = di-trans,octa-cis-undecaprenyl diphospho-N-acetyl-alpha-D-muramoyl-L-alanyl-D-glutamyl-meso-2,6-diaminopimeloyl-D-alanyl-D-alanine + UMP. It participates in cell wall biogenesis; peptidoglycan biosynthesis. Its function is as follows. Catalyzes the initial step of the lipid cycle reactions in the biosynthesis of the cell wall peptidoglycan: transfers peptidoglycan precursor phospho-MurNAc-pentapeptide from UDP-MurNAc-pentapeptide onto the lipid carrier undecaprenyl phosphate, yielding undecaprenyl-pyrophosphoryl-MurNAc-pentapeptide, known as lipid I. The chain is Phospho-N-acetylmuramoyl-pentapeptide-transferase from Prochlorococcus marinus subsp. pastoris (strain CCMP1986 / NIES-2087 / MED4).